Reading from the N-terminus, the 396-residue chain is S-adenosylmethionine synthase 3 (396 aa).

A Mg(2+)-binding site is contributed by Glu-13. Residue His-19 participates in ATP binding. Residue Glu-47 participates in K(+) binding. Residues Glu-60 and Gln-103 each coordinate L-methionine. ATP is bound by residues 171–173 (DGK), 239–242 (SGRF), Asp-250, 256–257 (RK), Ala-273, Lys-277, and Lys-281. L-methionine is bound at residue Asp-250. Lys-281 serves as a coordination point for L-methionine.

It belongs to the AdoMet synthase family. In terms of assembly, homotetramer. The cofactor is Mn(2+). Mg(2+) serves as cofactor. Co(2+) is required as a cofactor. Requires K(+) as cofactor. As to expression, expressed in roots, stems and leaves (at protein level).

The protein localises to the cytoplasm. It carries out the reaction L-methionine + ATP + H2O = S-adenosyl-L-methionine + phosphate + diphosphate. The protein operates within amino-acid biosynthesis; S-adenosyl-L-methionine biosynthesis; S-adenosyl-L-methionine from L-methionine: step 1/1. Catalyzes the formation of S-adenosylmethionine from methionine and ATP. The reaction comprises two steps that are both catalyzed by the same enzyme: formation of S-adenosylmethionine (AdoMet) and triphosphate, and subsequent hydrolysis of the triphosphate. May be involved in the synthesis of betain in response to abiotic stress such as high salinity. In Atriplex nummularia (Old man saltbush), this protein is S-adenosylmethionine synthase 3 (SAMS3).